Consider the following 294-residue polypeptide: Aspartate carbamoyltransferase catalytic subunit (294 aa).

Carbamoyl phosphate contacts are provided by Arg49 and Thr50. Position 77 (Lys77) interacts with L-aspartate. Residues Arg99, His127, and Gln130 each contribute to the carbamoyl phosphate site. L-aspartate contacts are provided by Arg161 and Arg211. The carbamoyl phosphate site is built by Gly250 and Pro251.

The protein belongs to the aspartate/ornithine carbamoyltransferase superfamily. ATCase family. In terms of assembly, heterododecamer (2C3:3R2) of six catalytic PyrB chains organized as two trimers (C3), and six regulatory PyrI chains organized as three dimers (R2).

The enzyme catalyses carbamoyl phosphate + L-aspartate = N-carbamoyl-L-aspartate + phosphate + H(+). Its pathway is pyrimidine metabolism; UMP biosynthesis via de novo pathway; (S)-dihydroorotate from bicarbonate: step 2/3. In terms of biological role, catalyzes the condensation of carbamoyl phosphate and aspartate to form carbamoyl aspartate and inorganic phosphate, the committed step in the de novo pyrimidine nucleotide biosynthesis pathway. The polypeptide is Aspartate carbamoyltransferase catalytic subunit (Sulfurovum sp. (strain NBC37-1)).